The chain runs to 383 residues: Na(+)/H(+) antiporter NhaA (383 aa).

Transmembrane regions (helical) follow at residues leucine 10 to proline 30, leucine 56 to isoleucine 76, isoleucine 91 to serine 111, glycine 121 to glycine 141, leucine 150 to phenylalanine 170, serine 174 to asparagine 194, valine 206 to alanine 226, proline 254 to serine 274, isoleucine 289 to phenylalanine 308, glycine 327 to phenylalanine 347, and alanine 355 to leucine 375.

Belongs to the NhaA Na(+)/H(+) (TC 2.A.33) antiporter family.

The protein resides in the cell inner membrane. The enzyme catalyses Na(+)(in) + 2 H(+)(out) = Na(+)(out) + 2 H(+)(in). In terms of biological role, na(+)/H(+) antiporter that extrudes sodium in exchange for external protons. This is Na(+)/H(+) antiporter NhaA from Francisella tularensis subsp. holarctica (strain FTNF002-00 / FTA).